The chain runs to 123 residues: Large ribosomal subunit protein uL18 (123 aa).

Belongs to the universal ribosomal protein uL18 family. As to quaternary structure, part of the 50S ribosomal subunit; part of the 5S rRNA/L5/L18/L25 subcomplex. Contacts the 5S and 23S rRNAs.

Its function is as follows. This is one of the proteins that bind and probably mediate the attachment of the 5S RNA into the large ribosomal subunit, where it forms part of the central protuberance. The sequence is that of Large ribosomal subunit protein uL18 from Chlamydia felis (strain Fe/C-56) (Chlamydophila felis).